The sequence spans 448 residues: Antizyme inhibitor 1 (448 aa).

It belongs to the Orn/Lys/Arg decarboxylase class-II family. ODC antizyme inhibitor subfamily. In terms of assembly, monomer. Interacts with OAZ1 and OAZ3; this interaction disrupts the interaction between the antizyme and ODC1. Post-translationally, ubiquitinated, leading to its proteasomal degradation; a process that is reduced in presence of antizyme OAZ1. In terms of tissue distribution, expressed during testis development.

It is found in the nucleus. Functionally, antizyme inhibitor (AZI) protein that positively regulates ornithine decarboxylase (ODC) activity and polyamine uptake. AZI is an enzymatically inactive ODC homolog that counteracts the negative effect of ODC antizymes (AZs) OAZ1, OAZ2 and OAZ3 on ODC activity by competing with ODC for antizyme-binding. Inhibits antizyme-dependent ODC degradation and releases ODC monomers from their inactive complex with antizymes, leading to formation of the catalytically active ODC homodimer and restoring polyamine production. The chain is Antizyme inhibitor 1 (Azin1) from Mus musculus (Mouse).